The sequence spans 183 residues: ATP-dependent protease subunit HslV (183 aa).

Thr13 is a catalytic residue. Residues Gly168, Cys171, and Thr174 each contribute to the Na(+) site.

This sequence belongs to the peptidase T1B family. HslV subfamily. A double ring-shaped homohexamer of HslV is capped on each side by a ring-shaped HslU homohexamer. The assembly of the HslU/HslV complex is dependent on binding of ATP.

Its subcellular location is the cytoplasm. The enzyme catalyses ATP-dependent cleavage of peptide bonds with broad specificity.. With respect to regulation, allosterically activated by HslU binding. Its function is as follows. Protease subunit of a proteasome-like degradation complex believed to be a general protein degrading machinery. The protein is ATP-dependent protease subunit HslV of Xanthomonas axonopodis pv. citri (strain 306).